Reading from the N-terminus, the 686-residue chain is Methionine--tRNA ligase (686 aa).

A 'HIGH' region motif is present at residues 15 to 25; it reads PYANGPIHLGH. Residues Cys-146, Cys-149, Cys-159, and Cys-162 each contribute to the Zn(2+) site. A 'KMSKS' region motif is present at residues 332–336; it reads KMSKS. ATP is bound at residue Lys-335. Residues 585–686 enclose the tRNA-binding domain; sequence TFAKTDLRVA…DGAKPGQRIM (102 aa).

This sequence belongs to the class-I aminoacyl-tRNA synthetase family. MetG type 1 subfamily. Homodimer. The cofactor is Zn(2+).

Its subcellular location is the cytoplasm. It carries out the reaction tRNA(Met) + L-methionine + ATP = L-methionyl-tRNA(Met) + AMP + diphosphate. Its function is as follows. Is required not only for elongation of protein synthesis but also for the initiation of all mRNA translation through initiator tRNA(fMet) aminoacylation. The protein is Methionine--tRNA ligase of Psychromonas ingrahamii (strain DSM 17664 / CCUG 51855 / 37).